We begin with the raw amino-acid sequence, 1024 residues long: Beta-galactosidase (1024 aa).

The substrate site is built by asparagine 103 and aspartate 202. Residue aspartate 202 coordinates Na(+). Mg(2+) contacts are provided by glutamate 417, histidine 419, and glutamate 462. Substrate-binding positions include glutamate 462 and 538–541; that span reads EYAH. Residue glutamate 462 is the Proton donor of the active site. Glutamate 538 serves as the catalytic Nucleophile. Mg(2+) is bound at residue asparagine 598. Na(+)-binding residues include phenylalanine 602 and asparagine 605. 2 residues coordinate substrate: asparagine 605 and tryptophan 1000.

It belongs to the glycosyl hydrolase 2 family. As to quaternary structure, homotetramer. The cofactor is Mg(2+). It depends on Na(+) as a cofactor.

The enzyme catalyses Hydrolysis of terminal non-reducing beta-D-galactose residues in beta-D-galactosides.. This is Beta-galactosidase from Escherichia coli (strain UTI89 / UPEC).